The sequence spans 370 residues: Phosphoserine aminotransferase (370 aa).

R38 contributes to the L-glutamate binding site. Pyridoxal 5'-phosphate-binding residues include W101, T143, D166, and Q189. Position 190 is an N6-(pyridoxal phosphate)lysine (K190). 243–244 (NT) lines the pyridoxal 5'-phosphate pocket.

This sequence belongs to the class-V pyridoxal-phosphate-dependent aminotransferase family. SerC subfamily. As to quaternary structure, homodimer. Requires pyridoxal 5'-phosphate as cofactor.

It localises to the cytoplasm. It carries out the reaction O-phospho-L-serine + 2-oxoglutarate = 3-phosphooxypyruvate + L-glutamate. It catalyses the reaction 4-(phosphooxy)-L-threonine + 2-oxoglutarate = (R)-3-hydroxy-2-oxo-4-phosphooxybutanoate + L-glutamate. The protein operates within amino-acid biosynthesis; L-serine biosynthesis; L-serine from 3-phospho-D-glycerate: step 2/3. It functions in the pathway cofactor biosynthesis; pyridoxine 5'-phosphate biosynthesis; pyridoxine 5'-phosphate from D-erythrose 4-phosphate: step 3/5. Catalyzes the reversible conversion of 3-phosphohydroxypyruvate to phosphoserine and of 3-hydroxy-2-oxo-4-phosphonooxybutanoate to phosphohydroxythreonine. In Methanosarcina mazei (strain ATCC BAA-159 / DSM 3647 / Goe1 / Go1 / JCM 11833 / OCM 88) (Methanosarcina frisia), this protein is Phosphoserine aminotransferase.